The following is a 192-amino-acid chain: Fe/S biogenesis protein NfuA (192 aa).

Cys149 and Cys152 together coordinate [4Fe-4S] cluster.

The protein belongs to the NfuA family. In terms of assembly, homodimer. The cofactor is [4Fe-4S] cluster.

Its function is as follows. Involved in iron-sulfur cluster biogenesis. Binds a 4Fe-4S cluster, can transfer this cluster to apoproteins, and thereby intervenes in the maturation of Fe/S proteins. Could also act as a scaffold/chaperone for damaged Fe/S proteins. This chain is Fe/S biogenesis protein NfuA, found in Alteromonas mediterranea (strain DSM 17117 / CIP 110805 / LMG 28347 / Deep ecotype).